A 269-amino-acid polypeptide reads, in one-letter code: Ribonuclease HII (269 aa).

The 195-residue stretch at Arg28–Arg222 folds into the RNase H type-2 domain. Asp34, Glu35, and Asp128 together coordinate a divalent metal cation.

Belongs to the RNase HII family. Mn(2+) serves as cofactor. Mg(2+) is required as a cofactor.

Its subcellular location is the cytoplasm. It carries out the reaction Endonucleolytic cleavage to 5'-phosphomonoester.. Its function is as follows. Endonuclease that specifically degrades the RNA of RNA-DNA hybrids. This Salinispora arenicola (strain CNS-205) protein is Ribonuclease HII.